We begin with the raw amino-acid sequence, 754 residues long: LON peptidase N-terminal domain and RING finger protein 2 (754 aa).

2 TPR repeats span residues 23-58 (IAQR…QPDR) and 59-91 (GLCL…GALR). Residues 112–136 (PLSAENPGGEPEAPGEGGPAPEPRA) form a disordered region. Low complexity predominate over residues 115–125 (AENPGGEPEAP). TPR repeat units lie at residues 197 to 230 (LRRL…APDD), 231 to 264 (NSLL…EPLL), and 266 to 298 (KGHQ…NPEC). A disordered region spans residues 398–439 (GLKRQFPDDVEDAPDLNAPGKIPKKDLSLQRSPNSETEESQG). The segment covering 426-439 (LQRSPNSETEESQG) has biased composition (polar residues). Residues 447-483 (FECALCMRLLFEPVTTPCGHTFCLKCLERCLDHAPHC) form a TPR 6 repeat. An RING-type zinc finger spans residues 449–487 (CALCMRLLFEPVTTPCGHTFCLKCLERCLDHAPHCPLCK). The region spanning 528 to 737 (MSELSNLTRD…AIRRILVIIT (210 aa)) is the Lon N-terminal domain.

The chain is LON peptidase N-terminal domain and RING finger protein 2 (LONRF2) from Homo sapiens (Human).